The chain runs to 276 residues: Transport and Golgi organization protein 2 homolog (276 aa).

This sequence belongs to the Tango2 family.

It localises to the cytoplasm. It is found in the mitochondrion. The protein localises to the golgi apparatus. May be involved in lipid homeostasis. The sequence is that of Transport and Golgi organization protein 2 homolog (TANGO2) from Homo sapiens (Human).